Consider the following 596-residue polypeptide: Tripeptidyl-peptidase SED2 (596 aa).

An N-terminal signal peptide occupies residues 1–16 (MLVLKFVCLLASVAAA). Positions 18 to 203 (PTSWSSHKVV…LEAMSEEEFS (186 aa)) are cleaved as a propeptide — removed in mature form. The Peptidase S53 domain maps to 210–596 (LVTTACLREL…NFQALTKVLP (387 aa)). The N-linked (GlcNAc...) asparagine glycan is linked to Asn265. Residues Glu286 and Asp290 each act as charge relay system in the active site. Asn403 carries an N-linked (GlcNAc...) asparagine glycan. Ser501 functions as the Charge relay system in the catalytic mechanism. Residues Asp543 and Ile544 each coordinate Ca(2+). Asn572 carries N-linked (GlcNAc...) asparagine glycosylation. Residues Gly576 and Asp578 each contribute to the Ca(2+) site.

Ca(2+) is required as a cofactor.

The protein localises to the secreted. Its subcellular location is the extracellular space. It carries out the reaction Release of an N-terminal tripeptide from a polypeptide.. In terms of biological role, secreted tripeptidyl-peptidase which degrades proteins at acidic pHs and is involved in virulence. In Arthroderma otae (strain ATCC MYA-4605 / CBS 113480) (Microsporum canis), this protein is Tripeptidyl-peptidase SED2 (SED2).